The sequence spans 358 residues: Fructose-bisphosphate aldolase 7, cytosolic (358 aa).

Residue Ser2 is modified to N-acetylserine. Residue Arg52 participates in substrate binding. An S-glutathionyl cysteine; transient modification is found at Cys68. Position 142 (Lys142) interacts with substrate. Cys173 carries the post-translational modification S-glutathionyl cysteine; transient; alternate. Cys173 bears the S-nitrosocysteine; transient; alternate mark. Glu183 acts as the Proton acceptor in catalysis. Residue Lys225 is the Schiff-base intermediate with dihydroxyacetone-P of the active site. Residue Ser266 to Ile268 participates in substrate binding.

This sequence belongs to the class I fructose-bisphosphate aldolase family. As to quaternary structure, homotetramer. Post-translationally, S-glutathionylated at Cys-68 and Cys-173. In terms of processing, S-nitrosylated at Cys-173. In terms of tissue distribution, highly expressed in flowers, and at lower levels in rosettes leaves and cauline leaves.

The protein localises to the cytoplasm. The protein resides in the cytosol. The enzyme catalyses beta-D-fructose 1,6-bisphosphate = D-glyceraldehyde 3-phosphate + dihydroxyacetone phosphate. It participates in carbohydrate degradation; glycolysis; D-glyceraldehyde 3-phosphate and glycerone phosphate from D-glucose: step 4/4. In terms of biological role, plays a key role in glycolysis and gluconeogenesis. The protein is Fructose-bisphosphate aldolase 7, cytosolic of Arabidopsis thaliana (Mouse-ear cress).